A 487-amino-acid chain; its full sequence is Iron-sulfur cluster assembly SufBD family protein ycf24 (487 aa).

The protein belongs to the iron-sulfur cluster assembly SufBD family.

The protein resides in the plastid. It is found in the chloroplast. This chain is Iron-sulfur cluster assembly SufBD family protein ycf24 (ycf24), found in Pyropia yezoensis (Susabi-nori).